Here is a 462-residue protein sequence, read N- to C-terminus: Adenylosuccinate lyase (462 aa).

N(6)-(1,2-dicarboxyethyl)-AMP-binding positions include 21 to 22 (RY), 87 to 89 (KHD), and 114 to 115 (TS). His-162 (proton donor/acceptor) is an active-site residue. Position 236 (Gln-236) interacts with N(6)-(1,2-dicarboxyethyl)-AMP. The Proton donor/acceptor role is filled by Ser-287. N(6)-(1,2-dicarboxyethyl)-AMP is bound by residues Ser-288, 293–295 (KRN), and 332–336 (SAERC).

It belongs to the lyase 1 family. Adenylosuccinate lyase subfamily. In terms of assembly, homotetramer. Residues from neighboring subunits contribute catalytic and substrate-binding residues to each active site.

The enzyme catalyses N(6)-(1,2-dicarboxyethyl)-AMP = fumarate + AMP. It catalyses the reaction (2S)-2-[5-amino-1-(5-phospho-beta-D-ribosyl)imidazole-4-carboxamido]succinate = 5-amino-1-(5-phospho-beta-D-ribosyl)imidazole-4-carboxamide + fumarate. It participates in purine metabolism; AMP biosynthesis via de novo pathway; AMP from IMP: step 2/2. The protein operates within purine metabolism; IMP biosynthesis via de novo pathway; 5-amino-1-(5-phospho-D-ribosyl)imidazole-4-carboxamide from 5-amino-1-(5-phospho-D-ribosyl)imidazole-4-carboxylate: step 2/2. Functionally, catalyzes two reactions in de novo purine nucleotide biosynthesis. Catalyzes the breakdown of 5-aminoimidazole- (N-succinylocarboxamide) ribotide (SAICAR or 2-[5-amino-1-(5-phospho-beta-D-ribosyl)imidazole-4-carboxamido]succinate) to 5-aminoimidazole-4-carboxamide ribotide (AICAR or 5-amino-1-(5-phospho-beta-D-ribosyl)imidazole-4-carboxamide) and fumarate, and of adenylosuccinate (ADS or N(6)-(1,2-dicarboxyethyl)-AMP) to adenosine monophosphate (AMP) and fumarate. The chain is Adenylosuccinate lyase (purB) from Methanocaldococcus jannaschii (strain ATCC 43067 / DSM 2661 / JAL-1 / JCM 10045 / NBRC 100440) (Methanococcus jannaschii).